The sequence spans 88 residues: CLAVATA3/ESR (CLE)-related protein 42 (88 aa).

An N-terminal signal peptide occupies residues 1–24 (MRSPHITISLVFLFFLFLIIQTHQ). A disordered region spans residues 69–88 (KMIGANEHGVPSGPNPISNR). 2 positions are modified to hydroxyproline: proline 79 and proline 82. Proline 82 carries O-linked (Ara...) hydroxyproline glycosylation.

It belongs to the CLV3/ESR signal peptide family. The O-glycosylation (arabinosylation) of the hydroxyproline Pro-82 enhances binding affinity of the CLE42p peptide for its receptor. Expressed at low levels in seedlings, roots and inflorescence.

The protein localises to the secreted. Its subcellular location is the extracellular space. Extracellular signal peptide that regulates cell fate. Represses tracheary element differentiation but promotes the formation of procambial cells. This Arabidopsis thaliana (Mouse-ear cress) protein is CLAVATA3/ESR (CLE)-related protein 42.